Consider the following 153-residue polypeptide: Arginine repressor (153 aa).

The protein belongs to the ArgR family.

The protein resides in the cytoplasm. It participates in amino-acid biosynthesis; L-arginine biosynthesis [regulation]. Functionally, regulates arginine biosynthesis genes. The protein is Arginine repressor of Syntrophomonas wolfei subsp. wolfei (strain DSM 2245B / Goettingen).